An 896-amino-acid polypeptide reads, in one-letter code: Cytokine receptor common subunit beta (896 aa).

The N-terminal stretch at 1–22 (MDQQMALTWGLCYMALVALCWG) is a signal peptide. The Extracellular portion of the chain corresponds to 23–441 (HGVTEAEETV…SEEYTWKTDW (419 aa)). Cys39 and Cys49 form a disulfide bridge. N-linked (GlcNAc...) asparagine glycosylation occurs at Asn62. 2 cysteine pairs are disulfide-bonded: Cys77-Cys99 and Cys88-Cys94. A Fibronectin type-III 1 domain is found at 136 to 243 (PPLPKNVSIS…PEVHWDSQPG (108 aa)). Residue Asn141 is glycosylated (N-linked (GlcNAc...) asparagine). Residues 220-233 (SPGSSLSGRPSRWS) are compositionally biased toward low complexity. Positions 220 to 243 (SPGSSLSGRPSRWSPEVHWDSQPG) are disordered. Cystine bridges form between Cys253-Cys263 and Cys292-Cys310. In terms of domain architecture, Fibronectin type-III 2 spans 343-439 (QMEPPTLNLT…KWSEEYTWKT (97 aa)). An N-linked (GlcNAc...) asparagine glycan is attached at Asn350. The short motif at 428 to 432 (WSKWS) is the WSXWS motif element. The helical transmembrane segment at 442-463 (VMPTLWIVLILVFLILTLLLIL) threads the bilayer. Residues 464-896 (RFGCVSVYRT…WDNSQSGKVC (433 aa)) lie on the Cytoplasmic side of the membrane. A Box 1 motif motif is present at residues 477–485 (WKEKIPNPS). Disordered stretches follow at residues 543–620 (EDPN…GGSL) and 658–725 (CGSS…TGPL). Polar residues-rich tracts occupy residues 555–571 (PDTT…QLPN) and 658–668 (CGSSLETSGSP). Over residues 716–725 (PVLTLPTGPL) the composition is skewed to low complexity. 2 positions are modified to phosphoserine: Ser752 and Ser754. Residue Tyr765 is modified to Phosphotyrosine. Residues 771–810 (SVSQAAKSPPGHPAPPVASSPTVIPGEPREEVGPASPHPE) are disordered.

Belongs to the type I cytokine receptor family. Type 4 subfamily. In terms of assembly, heterodimer of an alpha and a beta subunit. The beta subunit is common to the IL3, IL5 and GM-CSF receptors. The signaling GM-CSF receptor complex is a dodecamer of two head-to-head hexamers of two alpha, two beta, and two ligand subunits. Interacts with TMEM102; this interaction occurs preferentially in the absence of CSF2. Interacts with FCER1G; this interaction is direct. Interacts with LYN. Post-translationally, may be phosphorylated by LYN.

Its subcellular location is the membrane. Its function is as follows. High affinity receptor for interleukin-3, interleukin-5 and granulocyte-macrophage colony-stimulating factor. This is Cytokine receptor common subunit beta (Csf2rb) from Mus musculus (Mouse).